The following is a 285-amino-acid chain: Transmembrane protein DDB_G0269096 (285 aa).

Disordered stretches follow at residues 1–25 and 59–87; these read MEDRNLERNIGSDISSSSSIDMSQS and SFENGENNNNNNNNNNNNNNNNNNNNNKN. Composition is skewed to low complexity over residues 12-25 and 65-85; these read SDISSSSSIDMSQS and NNNNNNNNNNNNNNNNNNNNN. The next 5 helical transmembrane spans lie at 124-144, 152-172, 182-202, 205-225, and 250-270; these read LEEIGWTWLASFTGILVLALI, AQMQVLIGSFAASAVIIFGVP, LIMGHFLSAVVGSVIRVALVY, ANFEVACALAVSLSIMLMQFT, and FYFIFVPILSGALIMLLTALV.

Its subcellular location is the membrane. In Dictyostelium discoideum (Social amoeba), this protein is Transmembrane protein DDB_G0269096.